Consider the following 353-residue polypeptide: Small ribosomal subunit biogenesis GTPase RsgA (353 aa).

Residues 1–17 show a composition bias toward polar residues; the sequence is MSKNKLSKGQQRRVNAN. Positions 1 to 25 are disordered; that stretch reads MSKNKLSKGQQRRVNANHQRRLKTT. One can recognise a CP-type G domain in the interval 104–274; it reads ASVLTRPDFY…VIDSPGVREF (171 aa). Residues 160–163 and 214–222 contribute to the GTP site; these read NKID and GQSGVGKSS. 4 residues coordinate Zn(2+): Cys298, Cys303, His305, and Cys311.

The protein belongs to the TRAFAC class YlqF/YawG GTPase family. RsgA subfamily. As to quaternary structure, monomer. Associates with 30S ribosomal subunit, binds 16S rRNA. Zn(2+) serves as cofactor.

It is found in the cytoplasm. Functionally, one of several proteins that assist in the late maturation steps of the functional core of the 30S ribosomal subunit. Helps release RbfA from mature subunits. May play a role in the assembly of ribosomal proteins into the subunit. Circularly permuted GTPase that catalyzes slow GTP hydrolysis, GTPase activity is stimulated by the 30S ribosomal subunit. The protein is Small ribosomal subunit biogenesis GTPase RsgA of Klebsiella pneumoniae (strain 342).